Here is a 415-residue protein sequence, read N- to C-terminus: Esterase FrsA (415 aa).

Belongs to the FrsA family.

The catalysed reaction is a carboxylic ester + H2O = an alcohol + a carboxylate + H(+). Its function is as follows. Catalyzes the hydrolysis of esters. This chain is Esterase FrsA, found in Yersinia enterocolitica serotype O:8 / biotype 1B (strain NCTC 13174 / 8081).